The sequence spans 237 residues: Undecaprenyl-diphosphatase (237 aa).

7 helical membrane passes run 38-58 (QTAV…FDGI), 65-85 (WRII…GVLF), 92-112 (LFSS…ILMF), 126-146 (MSFL…FPGI), 166-186 (ALQY…ILGL), 191-211 (VTIL…YVLS), and 217-237 (GKIW…YLVG).

Belongs to the UppP family.

The protein localises to the cell inner membrane. The enzyme catalyses di-trans,octa-cis-undecaprenyl diphosphate + H2O = di-trans,octa-cis-undecaprenyl phosphate + phosphate + H(+). Its function is as follows. Catalyzes the dephosphorylation of undecaprenyl diphosphate (UPP). Confers resistance to bacitracin. This chain is Undecaprenyl-diphosphatase, found in Thermotoga sp. (strain RQ2).